The chain runs to 745 residues: Phosphoribosylformylglycinamidine synthase subunit PurL (745 aa).

The active site involves His-54. Residues Tyr-57 and Lys-96 each contribute to the ATP site. Glu-98 lines the Mg(2+) pocket. Substrate is bound by residues 99-102 (SHNH) and Arg-121. Residue His-100 is the Proton acceptor of the active site. Residue Asp-122 participates in Mg(2+) binding. Gln-250 lines the substrate pocket. Asp-278 is a Mg(2+) binding site. A substrate-binding site is contributed by 322–324 (ESQ). Residues Asp-503 and Gly-540 each coordinate ATP. Residue Asn-541 participates in Mg(2+) binding. A substrate-binding site is contributed by Ser-543.

This sequence belongs to the FGAMS family. As to quaternary structure, monomer. Part of the FGAM synthase complex composed of 1 PurL, 1 PurQ and 2 PurS subunits.

The protein localises to the cytoplasm. The catalysed reaction is N(2)-formyl-N(1)-(5-phospho-beta-D-ribosyl)glycinamide + L-glutamine + ATP + H2O = 2-formamido-N(1)-(5-O-phospho-beta-D-ribosyl)acetamidine + L-glutamate + ADP + phosphate + H(+). The protein operates within purine metabolism; IMP biosynthesis via de novo pathway; 5-amino-1-(5-phospho-D-ribosyl)imidazole from N(2)-formyl-N(1)-(5-phospho-D-ribosyl)glycinamide: step 1/2. Part of the phosphoribosylformylglycinamidine synthase complex involved in the purines biosynthetic pathway. Catalyzes the ATP-dependent conversion of formylglycinamide ribonucleotide (FGAR) and glutamine to yield formylglycinamidine ribonucleotide (FGAM) and glutamate. The FGAM synthase complex is composed of three subunits. PurQ produces an ammonia molecule by converting glutamine to glutamate. PurL transfers the ammonia molecule to FGAR to form FGAM in an ATP-dependent manner. PurS interacts with PurQ and PurL and is thought to assist in the transfer of the ammonia molecule from PurQ to PurL. The polypeptide is Phosphoribosylformylglycinamidine synthase subunit PurL (Helicobacter hepaticus (strain ATCC 51449 / 3B1)).